Consider the following 231-residue polypeptide: Trypsin (231 aa).

The propeptide at phenylalanine 1 to lysine 8 is activation peptide. The Peptidase S1 domain occupies isoleucine 9 to alanine 229. 6 disulfide bridges follow: cysteine 15–cysteine 145, cysteine 33–cysteine 49, cysteine 117–cysteine 218, cysteine 124–cysteine 191, cysteine 156–cysteine 170, and cysteine 181–cysteine 205. The active-site Charge relay system is histidine 48. Ca(2+)-binding residues include glutamate 60, asparagine 62, valine 65, and glutamate 70. Aspartate 92 acts as the Charge relay system in catalysis. Serine 185 serves as the catalytic Charge relay system.

Belongs to the peptidase S1 family. The cofactor is Ca(2+).

The protein localises to the secreted. Its subcellular location is the extracellular space. It catalyses the reaction Preferential cleavage: Arg-|-Xaa, Lys-|-Xaa.. In Sus scrofa (Pig), this protein is Trypsin.